Here is a 459-residue protein sequence, read N- to C-terminus: Nuclear distribution protein nudF 1 (459 aa).

Residues 9–41 (QAEELHKSIIAYLSANNLSNAASALRGELGLSE) form the LisH domain. The stretch at 61–88 (TSIVRLQKKIMDLEARCGALQTELNNAT) forms a coiled coil. WD repeat units lie at residues 114-155 (SHRN…TTLK), 157-197 (HTRA…KNIR), 201-240 (GHEHSVSAVRFIPGRNLLTSASRDKDLRIWDVTTGFCVKT), 243-282 (GHSGWVRDVCPSFDGNYLFSAGDDVTARLWDITNISNPEA), 288-349 (GHDH…LMTL), 351-390 (GHDNWVRAIVFHPGGKYLLSASDDKSIRCWDLSQDGKCVK), 395-440 (AHGR…PQVQ), and 442-459 (RCVVASGGVDQKLNIFAN).

The protein belongs to the WD repeat LIS1/nudF family. Self-associates. Interacts with nudE and dynein.

It is found in the cytoplasm. Its subcellular location is the cytoskeleton. It localises to the spindle pole. Positively regulates the activity of the minus-end directed microtubule motor protein dynein. May enhance dynein-mediated microtubule sliding by targeting dynein to the microtubule plus end. Required for nuclear migration during vegetative growth as well as development. Required for retrograde early endosome (EE) transport from the hyphal tip. Required for localization of dynein to the mitotic spindle poles. Recruits additional proteins to the dynein complex at SPBs. The polypeptide is Nuclear distribution protein nudF 1 (Talaromyces marneffei (strain ATCC 18224 / CBS 334.59 / QM 7333) (Penicillium marneffei)).